Here is a 131-residue protein sequence, read N- to C-terminus: Universal stress protein C (131 aa).

This sequence belongs to the universal stress protein A family.

The protein resides in the cytoplasm. In terms of biological role, required for resistance to DNA-damaging agents. The protein is Universal stress protein C (uspC) of Salmonella typhi.